The sequence spans 91 residues: Small ribosomal subunit protein bS20 (91 aa).

Basic and acidic residues predominate over residues 1–21; the sequence is MPLHKSAEKRLRQSARRNERN. Disordered regions lie at residues 1 to 25 and 71 to 91; these read MPLH…RARK and NKAS…AQKD.

Belongs to the bacterial ribosomal protein bS20 family.

Its function is as follows. Binds directly to 16S ribosomal RNA. This is Small ribosomal subunit protein bS20 from Prosthecochloris aestuarii (strain DSM 271 / SK 413).